The following is a 160-amino-acid chain: Cytochrome b6-f complex subunit 4 (160 aa).

3 helical membrane passes run 36-56 (LLYIFPVVILGTIACVVGLAV), 95-115 (LLGIALQTLIPLGLMILPFIE), and 131-151 (VVFLFGTFLTIYLGIGACLPI).

This sequence belongs to the cytochrome b family. PetD subfamily. In terms of assembly, the 4 large subunits of the cytochrome b6-f complex are cytochrome b6, subunit IV (17 kDa polypeptide, PetD), cytochrome f and the Rieske protein, while the 4 small subunits are PetG, PetL, PetM and PetN. The complex functions as a dimer.

It localises to the cellular thylakoid membrane. Its function is as follows. Component of the cytochrome b6-f complex, which mediates electron transfer between photosystem II (PSII) and photosystem I (PSI), cyclic electron flow around PSI, and state transitions. The polypeptide is Cytochrome b6-f complex subunit 4 (Prochlorococcus marinus (strain MIT 9515)).